Reading from the N-terminus, the 64-residue chain is Conotoxin LiC121 (64 aa).

The signal sequence occupies residues 1–22 (MRCVPVFIILLLLSPSAPSVDA). The propeptide occupies 23 to 48 (HPKTKDDVPLASFHDDAKRTLQRLWI).

It belongs to the conotoxin T superfamily. Post-translationally, contains 2 disulfide bonds that can be either 'C1-C3, C2-C4' or 'C1-C4, C2-C3', since these disulfide connectivities have been observed for conotoxins with cysteine framework V (for examples, see AC P0DQQ7 and AC P81755). Expressed by the venom duct.

It localises to the secreted. This chain is Conotoxin LiC121, found in Conus lividus (Livid cone).